The chain runs to 269 residues: GTP cyclohydrolase FolE2 1 (269 aa).

It belongs to the GTP cyclohydrolase IV family.

It catalyses the reaction GTP + H2O = 7,8-dihydroneopterin 3'-triphosphate + formate + H(+). It functions in the pathway cofactor biosynthesis; 7,8-dihydroneopterin triphosphate biosynthesis; 7,8-dihydroneopterin triphosphate from GTP: step 1/1. Its function is as follows. Converts GTP to 7,8-dihydroneopterin triphosphate. The chain is GTP cyclohydrolase FolE2 1 from Burkholderia cenocepacia (strain HI2424).